Here is a 124-residue protein sequence, read N- to C-terminus: Galanin peptides (124 aa).

Residues 1–19 (MARGSVILLGWLLLVVTLS) form the signal peptide. Positions 20–30 (ATLGLGMPAKE) are excised as a propeptide. Position 61 is a threonine amide (Thr-61). Residues Ser-117 and Ser-118 each carry the phosphoserine modification.

Belongs to the galanin family. Expressed in retinal progenitor cells and retinal ganglion cells (at protein level).

Its subcellular location is the secreted. Its function is as follows. Endocrine hormone of the central and peripheral nervous systems that binds and activates the G protein-coupled receptors GALR1, GALR2, and GALR3. This small neuropeptide may regulate diverse physiologic functions including contraction of smooth muscle of the gastrointestinal and genitourinary tract, growth hormone and insulin release and adrenal secretion. The chain is Galanin peptides (Gal) from Mus musculus (Mouse).